A 313-amino-acid chain; its full sequence is Olfactory receptor 1f45 (313 aa).

Residues 1-25 (MSSTNQSSVTEFLLLGLSRQPQQQQ) are Extracellular-facing. N-linked (GlcNAc...) asparagine glycosylation is present at Asn5. The chain crosses the membrane as a helical span at residues 26-50 (LLFLLFLIMYLATVLGNLLIILAIG). Over 51–57 (TDSRLHT) the chain is Cytoplasmic. The helical transmembrane segment at 58-79 (PMYFFLSNLSFVDVCFSSTTVP) threads the bilayer. The Extracellular segment spans residues 80 to 100 (KVLANHILGSQAISFSGCLTQ). An intrachain disulfide couples Cys97 to Cys189. Residues 101–120 (LYFLAVFGNMDNFLLAVMSY) traverse the membrane as a helical segment. Over 121-139 (DRFVAICHPLHYTTKMTRQ) the chain is Cytoplasmic. The helical transmembrane segment at 140 to 158 (LCVLLVVGSWVVANMNCLL) threads the bilayer. The Extracellular portion of the chain corresponds to 159-196 (HILLMARLSFCADNMIPHFFCDGTPLLKLSCSDTHLNE). A helical membrane pass occupies residues 197–219 (LMILTEGAVVMVTPFVCILISYI). The Cytoplasmic portion of the chain corresponds to 220–236 (HITCAVLRVSSPRGGWK). Residues 237-260 (SFSTCGSHLAVVCLFYGTVIAVYF) traverse the membrane as a helical segment. The Extracellular segment spans residues 261-272 (NPSSSHLAGRDM). The chain crosses the membrane as a helical span at residues 273–292 (AAAVMYAVVTPMLNPFIYSL). Topologically, residues 293-313 (RNSDMKAALRKVLAMRFPSKQ) are cytoplasmic.

Belongs to the G-protein coupled receptor 1 family. In terms of tissue distribution, olfactory epithelium.

The protein localises to the cell membrane. Odorant receptor. The chain is Olfactory receptor 1f45 (Or1f45) from Rattus norvegicus (Rat).